The sequence spans 424 residues: Gamma-glutamyl phosphate reductase (424 aa).

This sequence belongs to the gamma-glutamyl phosphate reductase family.

It localises to the cytoplasm. It catalyses the reaction L-glutamate 5-semialdehyde + phosphate + NADP(+) = L-glutamyl 5-phosphate + NADPH + H(+). It participates in amino-acid biosynthesis; L-proline biosynthesis; L-glutamate 5-semialdehyde from L-glutamate: step 2/2. Catalyzes the NADPH-dependent reduction of L-glutamate 5-phosphate into L-glutamate 5-semialdehyde and phosphate. The product spontaneously undergoes cyclization to form 1-pyrroline-5-carboxylate. This Parvibaculum lavamentivorans (strain DS-1 / DSM 13023 / NCIMB 13966) protein is Gamma-glutamyl phosphate reductase.